A 438-amino-acid chain; its full sequence is Trigger factor (438 aa).

The region spanning 160–231 (SDQVTIEEQG…IMDVKTKQLQ (72 aa)) is the PPIase FKBP-type domain. Positions 407-438 (AQLSGPQAETVAADQGEQQAEGQEESAEKSEE) are disordered. Positions 418–427 (AADQGEQQAE) are enriched in low complexity.

Belongs to the FKBP-type PPIase family. Tig subfamily.

Its subcellular location is the cytoplasm. It catalyses the reaction [protein]-peptidylproline (omega=180) = [protein]-peptidylproline (omega=0). Functionally, involved in protein export. Acts as a chaperone by maintaining the newly synthesized protein in an open conformation. Functions as a peptidyl-prolyl cis-trans isomerase. This chain is Trigger factor, found in Deinococcus deserti (strain DSM 17065 / CIP 109153 / LMG 22923 / VCD115).